The chain runs to 162 residues: Large ribosomal subunit protein uL15 (162 aa).

Positions 1–18 are enriched in basic and acidic residues; that stretch reads MKLNEIRDNEGATKDRMR. The disordered stretch occupies residues 1–42; the sequence is MKLNEIRDNEGATKDRMRVGRGIGSGKGKTAGRGVKGQKART. Residues 21–35 show a composition bias toward gly residues; it reads RGIGSGKGKTAGRGV.

It belongs to the universal ribosomal protein uL15 family. As to quaternary structure, part of the 50S ribosomal subunit.

Its function is as follows. Binds to the 23S rRNA. The chain is Large ribosomal subunit protein uL15 from Methylobacterium sp. (strain 4-46).